The primary structure comprises 187 residues: Probable DNA-directed RNA polymerase subunit delta (187 aa).

The HTH HARE-type domain maps to 14-81; that stretch reads LSMIEVAHAL…GNNVWALRSW (68 aa). Positions 96 to 187 are disordered; sequence EIEDEEEEKP…EDDSDDTDED (92 aa). Composition is skewed to acidic residues over residues 117–149 and 157–187; these read IEDE…EDKD and ELAE…TDED.

It belongs to the RpoE family. RNAP is composed of a core of 2 alpha, a beta and a beta' subunits. The core is associated with a delta subunit and one of several sigma factors.

In terms of biological role, participates in both the initiation and recycling phases of transcription. In the presence of the delta subunit, RNAP displays an increased specificity of transcription, a decreased affinity for nucleic acids, and an increased efficiency of RNA synthesis because of enhanced recycling. This is Probable DNA-directed RNA polymerase subunit delta from Lactococcus lactis subsp. cremoris (strain SK11).